The following is a 127-amino-acid chain: Protein NEGATIVE REGULATOR OF RESISTANCE (127 aa).

Disordered stretches follow at residues 1-28 and 47-127; these read MDATTTAKRKRPAASDIADDAPTTVDEV and TRRL…RAPA. The span at 112-127 shows a compositional bias: low complexity; it reads PPSDAPATPRSARAPA.

The protein belongs to the NPR1-interactor family. As to quaternary structure, interacts with NPR1/NH1. Interacts with NPR3/NH3.

The protein resides in the nucleus. In terms of biological role, acts as a negative regulator of disease resistance. Acts on basal resistance, age-related resistance and resistance mediated by the LRR receptor kinase XA21. Plants over-expressing NRR display enhanced susceptibility to the bacterial blight Xanthomonas oryzae pv. oryzae (Xoo). Binds to and represses NPR1/NH1-mediated transcriptional activation of LG2 in vitro. In Oryza sativa subsp. japonica (Rice), this protein is Protein NEGATIVE REGULATOR OF RESISTANCE.